The chain runs to 231 residues: Large ribosomal subunit protein uL1 (231 aa).

It belongs to the universal ribosomal protein uL1 family. In terms of assembly, part of the 50S ribosomal subunit.

Functionally, binds directly to 23S rRNA. The L1 stalk is quite mobile in the ribosome, and is involved in E site tRNA release. Protein L1 is also a translational repressor protein, it controls the translation of the L11 operon by binding to its mRNA. This chain is Large ribosomal subunit protein uL1, found in Pseudomonas fluorescens (strain Pf0-1).